The primary structure comprises 355 residues: 3-dehydroquinate synthase (355 aa).

NAD(+) contacts are provided by residues Glu-71–Lys-76, Gly-105–Asp-109, Thr-129–Ser-130, Lys-142, and Lys-151. Residues Glu-184, His-246, and His-263 each contribute to the Zn(2+) site.

Belongs to the sugar phosphate cyclases superfamily. Dehydroquinate synthase family. Co(2+) is required as a cofactor. It depends on Zn(2+) as a cofactor. NAD(+) serves as cofactor.

The protein localises to the cytoplasm. It catalyses the reaction 7-phospho-2-dehydro-3-deoxy-D-arabino-heptonate = 3-dehydroquinate + phosphate. It functions in the pathway metabolic intermediate biosynthesis; chorismate biosynthesis; chorismate from D-erythrose 4-phosphate and phosphoenolpyruvate: step 2/7. In terms of biological role, catalyzes the conversion of 3-deoxy-D-arabino-heptulosonate 7-phosphate (DAHP) to dehydroquinate (DHQ). The sequence is that of 3-dehydroquinate synthase from Streptococcus pneumoniae (strain 70585).